The chain runs to 192 residues: Elongation factor P (192 aa).

Belongs to the elongation factor P family.

It is found in the cytoplasm. It participates in protein biosynthesis; polypeptide chain elongation. Functionally, involved in peptide bond synthesis. Stimulates efficient translation and peptide-bond synthesis on native or reconstituted 70S ribosomes in vitro. Probably functions indirectly by altering the affinity of the ribosome for aminoacyl-tRNA, thus increasing their reactivity as acceptors for peptidyl transferase. This chain is Elongation factor P (efp), found in Borreliella burgdorferi (strain ATCC 35210 / DSM 4680 / CIP 102532 / B31) (Borrelia burgdorferi).